A 59-amino-acid chain; its full sequence is UPF0434 protein lpl1884 (59 aa).

The protein belongs to the UPF0434 family.

The protein is UPF0434 protein lpl1884 of Legionella pneumophila (strain Lens).